Here is a 276-residue protein sequence, read N- to C-terminus: uncharacterized protein (276 aa).

Residues methionine 1 to glycine 4 constitute a propeptide, leader sequence. Methionine 5 is subject to N-methylmethionine. Residues methionine 5–tyrosine 26 form a helical membrane-spanning segment.

Its subcellular location is the membrane. This is an uncharacterized protein from Aquifex aeolicus (strain VF5).